Reading from the N-terminus, the 457-residue chain is Chromosomal replication initiator protein DnaA (457 aa).

Residues 1–90 (MAVSLWQQCI…RPSAKPQAPA (90 aa)) form a domain I, interacts with DnaA modulators region. Residues 79–120 (GSRPSAKPQAPAPAAVKAAAPQPKPGNSFVSQPEPAVSNHRS) are disordered. Residues 84 to 99 (AKPQAPAPAAVKAAAP) are compositionally biased toward low complexity. The interval 91–120 (PAAVKAAAPQPKPGNSFVSQPEPAVSNHRS) is domain II. A domain III, AAA+ region region spans residues 121–337 (NINPTYQFDN…GALNRVIANA (217 aa)). Positions 165, 167, 168, and 169 each coordinate ATP. A domain IV, binds dsDNA region spans residues 338–457 (NFTGRPITID…YANLIRTLSS (120 aa)).

This sequence belongs to the DnaA family. Oligomerizes as a right-handed, spiral filament on DNA at oriC.

It is found in the cytoplasm. Functionally, plays an essential role in the initiation and regulation of chromosomal replication. ATP-DnaA binds to the origin of replication (oriC) to initiate formation of the DNA replication initiation complex once per cell cycle. Binds the DnaA box (a 9 base pair repeat at the origin) and separates the double-stranded (ds)DNA. Forms a right-handed helical filament on oriC DNA; dsDNA binds to the exterior of the filament while single-stranded (ss)DNA is stabiized in the filament's interior. The ATP-DnaA-oriC complex binds and stabilizes one strand of the AT-rich DNA unwinding element (DUE), permitting loading of DNA polymerase. After initiation quickly degrades to an ADP-DnaA complex that is not apt for DNA replication. Binds acidic phospholipids. This Shewanella amazonensis (strain ATCC BAA-1098 / SB2B) protein is Chromosomal replication initiator protein DnaA.